Consider the following 356-residue polypeptide: Protein-glutamate methylesterase/protein-glutamine glutaminase 2 (356 aa).

A Response regulatory domain is found at 4 to 121 (KVLIVDDSAV…KGFLEESSHE (118 aa)). The residue at position 55 (D55) is a 4-aspartylphosphate. Positions 169–356 (FATTERIIAI…LELIAKAICR (188 aa)) constitute a CheB-type methylesterase domain. Catalysis depends on residues S181, H207, and D303.

It belongs to the CheB family. Post-translationally, phosphorylated by CheA. Phosphorylation of the N-terminal regulatory domain activates the methylesterase activity.

Its subcellular location is the cytoplasm. It catalyses the reaction [protein]-L-glutamate 5-O-methyl ester + H2O = L-glutamyl-[protein] + methanol + H(+). The catalysed reaction is L-glutaminyl-[protein] + H2O = L-glutamyl-[protein] + NH4(+). In terms of biological role, involved in chemotaxis. Part of a chemotaxis signal transduction system that modulates chemotaxis in response to various stimuli. Catalyzes the demethylation of specific methylglutamate residues introduced into the chemoreceptors (methyl-accepting chemotaxis proteins or MCP) by CheR. Also mediates the irreversible deamidation of specific glutamine residues to glutamic acid. The protein is Protein-glutamate methylesterase/protein-glutamine glutaminase 2 of Chromobacterium violaceum (strain ATCC 12472 / DSM 30191 / JCM 1249 / CCUG 213 / NBRC 12614 / NCIMB 9131 / NCTC 9757 / MK).